Consider the following 491-residue polypeptide: MAIPKHSLSPVPWEEDSFLQVKVEEEEEASLSQGGESSHDHIAHSEAARLRFRHFRYEEASGPHEALAHLRALCCQWLQPEAHSKEQILELLVLEQFLGALPPEIQAWVGAQSPKSGEEAAVLVEDLTQVLDKRGWDPGAEPTEASCKQSDLGESEPSNVTETLMGGVSLGPAFVKACEPEGSSERSGLSGEIWTKSVTQQIHFKKTSGPYKDVPTDQRGRESGASRNSSSAWPNLTSQEKPPSEDKFDLVDAYGTEPPYTYSGKRSSKCRECRKMFQSASALEAHQKTHSRKTPYACSECGKAFSRSTHLAQHQVVHTGAKPHECKECGKAFSRVTHLTQHQRIHTGEKPYKCGECGKTFSRSTHLTQHQRVHTGERPYECDACGKAFSQSTHLTQHQRIHTGEKPYKCDACGRAFSDCSALIRHLRIHSGEKPYQCKVCPKAFAQSSSLIEHQRIHTGEKPYKCSDCGKAFSRSSALMVHLRIHITVLQ.

Position 9 is a phosphoserine (serine 9). The region spanning arginine 49–leucine 131 is the SCAN box domain. Disordered stretches follow at residues arginine 134–threonine 161 and phenylalanine 204–aspartate 249. The span at valine 214–glycine 224 shows a compositional bias: basic and acidic residues. Residues alanine 225 to lysine 241 show a composition bias toward polar residues. C2H2-type zinc fingers lie at residues serine 268 to histidine 290, tyrosine 296 to histidine 318, histidine 324 to histidine 346, tyrosine 352 to histidine 374, tyrosine 380 to histidine 402, tyrosine 408 to histidine 430, tyrosine 436 to histidine 458, and tyrosine 464 to histidine 486. Residue lysine 443 forms a Glycyl lysine isopeptide (Lys-Gly) (interchain with G-Cter in SUMO2) linkage.

It belongs to the krueppel C2H2-type zinc-finger protein family.

The protein localises to the nucleus. Its function is as follows. May be involved in transcriptional regulation. The chain is Zinc finger and SCAN domain-containing protein 22 (ZSCAN22) from Homo sapiens (Human).